The chain runs to 382 residues: Sphingoid long-chain base transporter RSB1 (382 aa).

At 1-34 the chain is on the extracellular side; sequence MSNATNNTLGSLLPQLEAAANSNSLYGGMVPNLR. N3 and N6 each carry an N-linked (GlcNAc...) asparagine glycan. Residues 35 to 55 traverse the membrane as a helical segment; the sequence is FNITMIVIWGILLTIHVVQLL. Over 56-57 the chain is Cytoplasmic; sequence MR. The chain crosses the membrane as a helical span at residues 58–78; the sequence is QYWFSIAFICTGILEVLGFIG. Residues 79 to 90 are Extracellular-facing; sequence RTWSHSNVADMD. The helical transmembrane segment at 91–111 threads the bilayer; the sequence is AFLLNMICLTIAPVFTMGGIY. The Cytoplasmic portion of the chain corresponds to 112–135; it reads YQLAKLIEVYGHRFSLLPSPMAYS. The helical transmembrane segment at 136-156 threads the bilayer; that stretch reads FIFICSDIVSLVVQAVGGGLC. Over 157–171 the chain is Extracellular; sequence GVAVTDGTSTTTGNH. The helical transmembrane segment at 172 to 192 threads the bilayer; the sequence is VFIAGLAIQVASMAIFLMLWF. At 193 to 241 the chain is on the cytoplasmic side; that stretch reads HFLFRIYISVRWEHINSRPISLSLLKISQTEVDYLYREKFHFLRLEPKR. The helical transmembrane segment at 242–262 threads the bilayer; that stretch reads WVFHYFNLAITVAVLTIFTRC. The Extracellular portion of the chain corresponds to 263 to 281; it reads CYRLAELVVGWDGYLITHE. Residues 282-302 form a helical membrane-spanning segment; the sequence is WYFIILDALMMAIATVTLTIF. Residues 303–382 are Cytoplasmic-facing; it reads HPGFAFKGKS…LFSSKKKAKL (80 aa).

This sequence belongs to the lipid-translocating exporter (LTE) (TC 9.A.26.1) family.

The protein resides in the cell membrane. In terms of biological role, catalyzes the ATP-dependent translocation of sphingoid long-chain bases (LCBs) from the cytoplasmic site toward the extracytoplasmic side of the membrane (flip-flop). Involved in the establishment of the functional lipid asymmetry of the plasma membrane. Regulates intracellular levels of LCBs, sphingolipid precursors that are growth inhibitory at increased levels. The chain is Sphingoid long-chain base transporter RSB1 (RSB1) from Saccharomyces cerevisiae (strain JAY291) (Baker's yeast).